The primary structure comprises 493 residues: Solute carrier family 2, facilitated glucose transporter member 3 (493 aa).

Over 1–10 (MGTTKVTPSL) the chain is Cytoplasmic. The helical transmembrane segment at 11 to 32 (VFAVTVATIGSFQFGYNTGVIN) threads the bilayer. At 33-64 (APETILKDFLNYTLEERLEDLPSEGLLTALWS) the chain is on the extracellular side. Residue N43 is glycosylated (N-linked (GlcNAc...) asparagine). The chain crosses the membrane as a helical span at residues 65-85 (LCVAIFSVGGMIGSFSVGLFV). The Cytoplasmic portion of the chain corresponds to 86–90 (NRFGR). Residues 91–111 (RNSMLLVNLLAIIAGCLMGFA) traverse the membrane as a helical segment. Over 112–118 (KIAESVE) the chain is Extracellular. A helical transmembrane segment spans residues 119–142 (MLILGRLLIGIFCGLCTGFVPMYI). The Cytoplasmic portion of the chain corresponds to 143 to 153 (GEVSPTALRGA). A helical membrane pass occupies residues 154 to 174 (FGTLNQLGIVVGILVAQIFGL). Q159 lines the D-glucose pocket. Over 175–183 (DFILGSEEL) the chain is Extracellular. The chain crosses the membrane as a helical span at residues 184 to 204 (WPGLLGLTIIPAILQSAALPF). The Cytoplasmic portion of the chain corresponds to 205 to 269 (CPESPRFLLI…LFRSPNYVQP (65 aa)). Phosphothreonine is present on T232. Residues 270–290 (LLISIVLQLSQQLSGINAVFY) traverse the membrane as a helical segment. Residues 277–279 (QLS) are important for selectivity against fructose. D-glucose is bound by residues 280–281 (QQ) and N286. Over 291-304 (YSTGIFKDAGVQEP) the chain is Extracellular. A helical membrane pass occupies residues 305-325 (IYATIGAGVVNTIFTVVSLFL). N315 provides a ligand contact to D-glucose. The Cytoplasmic portion of the chain corresponds to 326-331 (VERAGR). Residues 332–352 (RTLHMIGLGGMAVCSVFMTIS) traverse the membrane as a helical segment. At 353–363 (LLLKDDYEAMS) the chain is on the extracellular side. A helical transmembrane segment spans residues 364 to 389 (FVCIVAILIYVAFFEIGPGPIPWFIV). 2 residues coordinate D-glucose: E378 and W386. Residues 390 to 399 (AELFSQGPRP) are Cytoplasmic-facing. The helical transmembrane segment at 400 to 420 (AAIAVAGCCNWTSNFLVGMLF) threads the bilayer. At 421–429 (PSAAAYLGA) the chain is on the extracellular side. A helical membrane pass occupies residues 430–450 (YVFIIFAAFLIFFLIFTFFKV). Topologically, residues 451–493 (PETKGRTFEDIARAFEGQAHSGKGPAGVELNSMQPVKETPGNA) are cytoplasmic. The segment at 469 to 493 (AHSGKGPAGVELNSMQPVKETPGNA) is disordered. 2 positions are modified to phosphoserine: S471 and S482. T489 bears the Phosphothreonine mark.

It belongs to the major facilitator superfamily. Sugar transporter (TC 2.A.1.1) family. Glucose transporter subfamily. As to quaternary structure, interacts with SMIM43; the interaction may promote SLC2A3-mediated glucose transport to meet the energy needs of mesendoderm differentiation. Expressed in spermatozoa (at protein level). Detected in brain (at protein level). Abundantly expressed in the hippocampus, cerebellum and cerebral cortex with lower expression in the dentate gyrus and piriform cortex.

It is found in the cell membrane. It localises to the perikaryon. The protein resides in the cell projection. It catalyses the reaction D-glucose(out) = D-glucose(in). It carries out the reaction D-galactose(in) = D-galactose(out). With respect to regulation, deoxyglucose transport is inhibited by D-glucose, D-galactose and maltose. Galactose transport is inhibited by D-glucose and maltose. In terms of biological role, facilitative glucose transporter. Can also mediate the uptake of various other monosaccharides across the cell membrane. Mediates the uptake of glucose, 2-deoxyglucose, galactose, mannose, xylose and fucose, and probably also dehydroascorbate. Does not mediate fructose transport. Required for mesendoderm differentiation. The polypeptide is Solute carrier family 2, facilitated glucose transporter member 3 (Mus musculus (Mouse)).